Consider the following 805-residue polypeptide: Angiotensin-converting enzyme 2 (805 aa).

An N-terminal signal peptide occupies residues 1 to 17 (MSSSCWLLLSLVAVATA). Topologically, residues 18-740 (QSLIEEKAES…LKPPYEPPVT (723 aa)) are extracellular. Residues 19–607 (SLIEEKAESF…QNRNSTVGWS (589 aa)) enclose the Peptidase M2 domain. 3 N-linked (GlcNAc...) asparagine glycosylation sites follow: Asn53, Asn82, and Asn90. Cys133 and Cys141 form a disulfide bridge. Residue Arg169 participates in chloride binding. Arg273 is a substrate binding site. Residue Asn299 is glycosylated (N-linked (GlcNAc...) asparagine). Cys344 and Cys361 form a disulfide bridge. Position 345 to 346 (345 to 346 (HP)) interacts with substrate. His374 lines the Zn(2+) pocket. The active-site Proton acceptor is Glu375. Zn(2+)-binding residues include His378 and Glu402. An N-linked (GlcNAc...) asparagine glycan is attached at Asn432. Residues Trp477 and Lys481 each coordinate chloride. His505 functions as the Proton donor in the catalytic mechanism. Tyr515 serves as a coordination point for substrate. The cysteines at positions 530 and 542 are disulfide-linked. Residues Asn546 and Asn601 are each glycosylated (N-linked (GlcNAc...) asparagine). In terms of domain architecture, Collectrin-like spans 614–805 (ADQSIKVRIS…QNSDDAQTSF (192 aa)). The tract at residues 652–659 (REYFSREK) is essential for cleavage by ADAM17. Residues Asn660 and Asn690 are each glycosylated (N-linked (GlcNAc...) asparagine). Residues 697-716 (RSEVEEAIRMSRGRINDIFG) form an essential for cleavage by TMPRSS11D and TMPRSS2 region. A helical transmembrane segment spans residues 741–761 (IWLIIFGVVMGTVVVGIVILI). The Cytoplasmic portion of the chain corresponds to 762 to 805 (VTGIKGRKKKNETKREENPYDSMDIGKGESNAGFQNSDDAQTSF). Residues 771–805 (KNETKREENPYDSMDIGKGESNAGFQNSDDAQTSF) form a disordered region. Residues 778–786 (ENPYDSMDI) carry the LIR motif. Phosphotyrosine is present on Tyr781. The Endocytic sorting signal motif lies at 781-784 (YDSM). The short motif at 781–785 (YDSMD) is the SH2-binding element. A Phosphoserine modification is found at Ser783. Lys788 is covalently cross-linked (Glycyl lysine isopeptide (Lys-Gly) (interchain with G-Cter in ubiquitin)). The PTB signature appears at 792 to 795 (NAGF). Residues 793–805 (AGFQNSDDAQTSF) are compositionally biased toward polar residues. The PDZ-binding motif lies at 803-805 (TSF).

The protein belongs to the peptidase M2 family. As to quaternary structure, homodimer. Interacts with the catalytically active form of TMPRSS2. Interacts with SLC6A19; this interaction is essential for expression and function of SLC6A19 in intestine. Interacts with ITGA5:ITGB1. Probably interacts (via endocytic sorting signal motif) with AP2M1; the interaction is inhibited by phosphorylation of Tyr-781. Interacts (via PDZ-binding motif) with NHERF1 (via PDZ domains); the interaction may enhance ACE2 membrane residence. The cofactor is Zn(2+). Requires chloride as cofactor. Glycosylated. In terms of processing, proteolytic cleavage by ADAM17 generates a secreted form. Also cleaved by serine proteases: TMPRSS2, TMPRSS11D and HPN/TMPRSS1. Post-translationally, phosphorylated. Phosphorylation at Tyr-781 probably inhibits interaction with AP2M1 and enables interactions with proteins containing SH2 domains. Ubiquitinated. Ubiquitinated on Lys-788 via 'Lys-48'-linked ubiquitin. 'Lys-48'-linked deubiquitinated by USP50 on the Lys-788; leading to its stabilization. Expressed in heart, kidney and forebrain. In testis, expression is restricted to Leydig cells. In heart, expressed in endothelial cells from small and large arteries, arterial smooth muscle cells, and myocytes (at protein level). Ubiquitously expressed, with highest levels in ileum, bladder and lung.

Its subcellular location is the secreted. It is found in the cell membrane. The protein localises to the cytoplasm. The protein resides in the cell projection. It localises to the cilium. Its subcellular location is the apical cell membrane. It carries out the reaction angiotensin II + H2O = angiotensin-(1-7) + L-phenylalanine. It catalyses the reaction angiotensin I + H2O = angiotensin-(1-9) + L-leucine. The enzyme catalyses bradykinin(1-8) + H2O = bradykinin(1-7) + L-phenylalanine. The catalysed reaction is neurotensin + H2O = neurotensin-(1-12) + L-leucine. It carries out the reaction kinetensin + H2O = kinetensin-(1-8) + L-leucine. It catalyses the reaction dynorphin A-(1-13) + H2O = dynorphin A-(1-12) + L-lysine. The enzyme catalyses apelin-13 + H2O = apelin-12 + L-phenylalanine. The catalysed reaction is [Pyr1]apelin-13 + H2O = [Pyr1]apelin-12 + L-phenylalanine. It carries out the reaction apelin-17 + H2O = apelin-16 + L-phenylalanine. Its activity is regulated as follows. Activated by chloride and fluoride, but not bromide. Inhibited by MLN-4760, cFP_Leu, and EDTA, but not by the ACE inhibitors linosipril, captopril, enalaprilat. Essential counter-regulatory carboxypeptidase of the renin-angiotensin hormone system that is a critical regulator of blood volume, systemic vascular resistance, and thus cardiovascular homeostasis. Converts angiotensin I to angiotensin 1-9, a nine-amino acid peptide with anti-hypertrophic effects in cardiomyocytes, and angiotensin II to angiotensin 1-7, which then acts as a beneficial vasodilator and anti-proliferation agent, counterbalancing the actions of the vasoconstrictor angiotensin II. Also removes the C-terminal residue from three other vasoactive peptides, neurotensin, kinetensin, and des-Arg bradykinin, but is not active on bradykinin. Also cleaves other biological peptides, such as apelins, casomorphins and dynorphin A. Plays an important role in amino acid transport by acting as binding partner of amino acid transporter SLC6A19 in intestine, regulating trafficking, expression on the cell surface, and its catalytic activity. This Rattus norvegicus (Rat) protein is Angiotensin-converting enzyme 2 (Ace2).